The chain runs to 235 residues: tRNA (guanine-N(7)-)-methyltransferase (235 aa).

Residues Gly-60, 83 to 84 (EI), 116 to 117 (NA), and Leu-136 contribute to the S-adenosyl-L-methionine site. Residue Asp-139 is part of the active site. An S-adenosyl-L-methionine-binding site is contributed by 214–216 (SEE).

It belongs to the class I-like SAM-binding methyltransferase superfamily. TrmB family.

It is found in the nucleus. The enzyme catalyses guanosine(46) in tRNA + S-adenosyl-L-methionine = N(7)-methylguanosine(46) in tRNA + S-adenosyl-L-homocysteine. It participates in tRNA modification; N(7)-methylguanine-tRNA biosynthesis. Catalyzes the formation of N(7)-methylguanine at position 46 (m7G46) in tRNA. The protein is tRNA (guanine-N(7)-)-methyltransferase of Anopheles gambiae (African malaria mosquito).